Consider the following 555-residue polypeptide: Carboxysome assembly protein CcmM (555 aa).

The interval 1 to 209 is has carbonic anhydrase (CA) activity; sequence MAVRSTAAPP…CIAPLRNDQV (209 aa). Glu56 (proton donor/acceptor) is an active-site residue. The Zn(2+) site is built by His75, His102, and His107. An intrachain disulfide couples Cys194 to Cys200. Residues 223-315 form a rbcS-like repeat 1, SSUL1 region; sequence SSEVASNSLG…RVLETIIQRP (93 aa). Disordered stretches follow at residues 323 to 351 and 441 to 464; these read TSFK…SNGA and NGQV…SGTA. Low complexity-rich tracts occupy residues 330-351 and 445-464; these read SNTN…SNGA and APSS…SGTA. Residues 347–440 form a rbcS-like repeat 2, SSUL2 region; the sequence is YSNGATSGKV…RVLESIIQRP (94 aa). Residues 460 to 555 are rbcS-like repeat 3, SSUL3; it reads SSGTATATAT…RVLETIIQRP (96 aa).

The protein belongs to the gamma-class carbonic anhydrase family. As to quaternary structure, probable homotrimer; zinc is bound between adjacent monomers. Full length protein (M58) interacts with CcmN. The C-terminal RbcS-like domains (SSUL) bind to holo-RuBisCO, as does the M35 short form. Zn(2+) is required as a cofactor. In terms of processing, the first amino acid of the short form (equivalent to Val-226) is not seen in Edman degradation, while Ser-230 may be post-translationally modified. Migrates in gels as 2 about equal forms of about 60 and 35 kDa (called M58 and M35). They are probably the result of alternative translation initiation.

It is found in the carboxysome. Its subcellular location is the cytoplasm. It catalyses the reaction hydrogencarbonate + H(+) = CO2 + H2O. Its activity is regulated as follows. Carbonic anhydrase (CA) activity is probably under redox control to remain inactive in the cytoplasm. Carbonic anhydrase (CA) activity of full-length protein and N-terminal fragment is inhibited by ethoxyzolamide. N-terminal fragment CA activity is activated under oxidizing conditions and inhibited under reducing conditions. In terms of biological role, functions as a scaffold protein for the assembly of beta-carboxysomes, initiates carboxysome assembly by coalescing RuBisCO (ribulose bisphosphate carboxylase, rbcL-rbcS). Produced as a full-length (M58) and a short form (M35), possibly by alternative translation initiation; probably both forms are required for correct carboxysome assembly and growth. In this strain both forms are equally abundant. Its function is as follows. A moderately active carbonic anhydrase that catalyzes the reversible hydration of carbon dioxide. Essential to photosynthetic carbon dioxide fixation, supplies CO(2) to ribulose bisphosphate carboxylase (RuBisCO) in the carboxysome. Also hydrolyzes COS. Beta-carboxysome assembly initiates when soluble RuBisCO is condensed into a liquid matrix in a pre-carboxysome by the RbcS-like domains of probably both forms of CcmM. CcmN interacts with the N-terminus of full length CcmM, and then recruits the shell proteins (CcmK) via CcmN's encapsulation peptide. Shell formation requires both CcmK proteins and CcmO. CcmL caps the otherwise elongated carboxysome. Once fully encapsulated carboxysomes are formed, they migrate within the cell probably via interactions with the cytoskeleton. This is Carboxysome assembly protein CcmM from Nostoc sp. (strain PCC 7120 / SAG 25.82 / UTEX 2576).